The primary structure comprises 424 residues: UPF0597 protein Sbal223_1296 (424 aa).

The protein belongs to the UPF0597 family.

This Shewanella baltica (strain OS223) protein is UPF0597 protein Sbal223_1296.